Consider the following 498-residue polypeptide: ATP synthase subunit beta, chloroplastic (498 aa).

172–179 (GGAGVGKT) serves as a coordination point for ATP.

Belongs to the ATPase alpha/beta chains family. As to quaternary structure, F-type ATPases have 2 components, CF(1) - the catalytic core - and CF(0) - the membrane proton channel. CF(1) has five subunits: alpha(3), beta(3), gamma(1), delta(1), epsilon(1). CF(0) has four main subunits: a(1), b(1), b'(1) and c(9-12).

It is found in the plastid. It localises to the chloroplast thylakoid membrane. It catalyses the reaction ATP + H2O + 4 H(+)(in) = ADP + phosphate + 5 H(+)(out). In terms of biological role, produces ATP from ADP in the presence of a proton gradient across the membrane. The catalytic sites are hosted primarily by the beta subunits. The polypeptide is ATP synthase subunit beta, chloroplastic (Panax ginseng (Korean ginseng)).